Consider the following 525-residue polypeptide: AP-4 complex accessory subunit Tepsin (525 aa).

Residues 8 to 141 (RDRLSFLHRL…FSDTVLPLAP (134 aa)) enclose the ENTH domain. The disordered stretch occupies residues 139–229 (LAPSQPLGTP…SHSGASREPG (91 aa)). Over residues 193 to 225 (SGPSSQNSSQNSDLSRVSDSGSHSGSDSHSGAS) the composition is skewed to low complexity. A phosphoserine mark is found at Ser333 and Ser356. The tract at residues 355 to 465 (LSPARGTSAE…PKRGPSSCAW (111 aa)) is disordered. The segment covering 393–412 (PLSSTPVSSRSPAPSSGMPS) has biased composition (low complexity). The segment covering 413–429 (SPVPTPPPDASPIPAPG) has biased composition (pro residues). Residues 434–448 (AEARLAESRRWRPER) show a composition bias toward basic and acidic residues. Residues 467–477 (RDSLFAGMELV) form an interaction with AP4B1 region. A disordered region spans residues 487–525 (AAAGESCPDAPRAPQTSSQRTAAKEPPGSEPSAFAFLNA). Residues 515 to 525 (SEPSAFAFLNA) form an interaction with AP4E1 region.

Interacts with AP4B1 and AP4E1; the interaction is direct and mediates the association of TEPSIN with the adapter-like complex 4 (AP-4), a heterotetramer composed of AP4B1, AP4E1, AP4M1 and AP4S1.

It is found in the golgi apparatus. The protein localises to the trans-Golgi network membrane. It localises to the cytoplasmic vesicle. The protein resides in the cytoplasm. Its subcellular location is the cytosol. Associates with the adapter-like complex 4 (AP-4) and may therefore play a role in vesicular trafficking of proteins at the trans-Golgi network. The protein is AP-4 complex accessory subunit Tepsin of Homo sapiens (Human).